A 207-amino-acid polypeptide reads, in one-letter code: Small ribosomal subunit protein uS4 (207 aa).

The tract at residues 31–53 is disordered; sequence KAKFDSKPGQHGRTSGARTSDFG. The S4 RNA-binding domain occupies 97–160; that stretch reads SRLDNVVYRM…KKQNRIVEAL (64 aa).

Belongs to the universal ribosomal protein uS4 family. As to quaternary structure, part of the 30S ribosomal subunit. Contacts protein S5. The interaction surface between S4 and S5 is involved in control of translational fidelity.

In terms of biological role, one of the primary rRNA binding proteins, it binds directly to 16S rRNA where it nucleates assembly of the body of the 30S subunit. Its function is as follows. With S5 and S12 plays an important role in translational accuracy. The chain is Small ribosomal subunit protein uS4 from Albidiferax ferrireducens (strain ATCC BAA-621 / DSM 15236 / T118) (Rhodoferax ferrireducens).